A 375-amino-acid polypeptide reads, in one-letter code: Alpha-1,2-galactosyltransferase (375 aa).

Over 1–2 the chain is Cytoplasmic; sequence MR. A helical; Signal-anchor for type II membrane protein membrane pass occupies residues 3–23; that stretch reads FAPYLISAVVITTIILGGAWW. The Lumenal segment spans residues 24–375; the sequence is TSAMDTKLQT…HIQNLLKPSS (352 aa).

The protein belongs to the glycosyltransferase 34 family. Post-translationally, O-glycosylated.

Its subcellular location is the golgi apparatus membrane. Involved in the O- and N-linked oligosaccharide modification of proteins transported through the Golgi stack. This occurs in cis Golgi where the enzyme transfers galactose from UDP-galactose to a variety of mannose based acceptors. The sequence is that of Alpha-1,2-galactosyltransferase (gma12) from Schizosaccharomyces pombe (strain 972 / ATCC 24843) (Fission yeast).